Here is a 454-residue protein sequence, read N- to C-terminus: N-acetyl-S-(2-succino)cysteine lyase (454 aa).

106 to 107 (TT) serves as a coordination point for fumarate. Catalysis depends on H154, which acts as the Proton donor/acceptor. R233 provides a ligand contact to fumarate. S277 (proton donor/acceptor) is an active-site residue. Residues T278 and 283–285 (KRN) contribute to the fumarate site.

This sequence belongs to the lyase 1 family.

It catalyses the reaction N-acetyl-S-(2-succino)-L-cysteine = N-acetyl-L-cysteine + fumarate. It participates in amino-acid biosynthesis; L-cysteine biosynthesis. Catalyzes the cleavage of N-acetyl-S-(2-succino)cysteine into fumarate and N-acetylcysteine. Is involved in a S-(2-succino)cysteine (2SC) degradation pathway that allows the bacterium to recover cysteine from 2SC and to detoxify 2SC that may be a toxic metabolite. Can also perform the reverse reaction in vitro, and has minor activity against 2SC and other small molecule thiols. The chain is N-acetyl-S-(2-succino)cysteine lyase from Dickeya dadantii (strain 3937) (Erwinia chrysanthemi (strain 3937)).